The chain runs to 83 residues: DNA-directed RNA polymerase subunit Rpo5 (83 aa).

Belongs to the archaeal Rpo5/eukaryotic RPB5 RNA polymerase subunit family. As to quaternary structure, part of the RNA polymerase complex.

The protein resides in the cytoplasm. The enzyme catalyses RNA(n) + a ribonucleoside 5'-triphosphate = RNA(n+1) + diphosphate. Its function is as follows. DNA-dependent RNA polymerase (RNAP) catalyzes the transcription of DNA into RNA using the four ribonucleoside triphosphates as substrates. The sequence is that of DNA-directed RNA polymerase subunit Rpo5 from Nitrosopumilus maritimus (strain SCM1).